The primary structure comprises 1982 residues: CASP8-associated protein 2 (1982 aa).

Ala2 is modified (N-acetylalanine). Phosphoserine is present on Ser20. Positions Val159–His191 are enriched in basic and acidic residues. The disordered stretch occupies residues Val159–Lys552. Ser194 carries the phosphoserine modification. Basic and acidic residues predominate over residues Leu198–Ser210. The span at Gly225–Asn240 shows a compositional bias: polar residues. Positions Gly286–Asn395 are enriched in basic and acidic residues. The segment covering Glu396–Lys405 has biased composition (polar residues). Composition is skewed to basic and acidic residues over residues Tyr406–Val423, Lys444–His455, and Lys463–Val524. Ser567 carries the phosphoserine modification. Residues Ala569–Asp593 form a disordered region. Phosphoserine is present on residues Ser658, Ser815, and Ser875. Disordered regions lie at residues Ser875 to Met1017, Phe1157 to Asn1188, and Glu1251 to Leu1283. Residues Ser894–Asp904 show a composition bias toward polar residues. Basic and acidic residues-rich tracts occupy residues Leu905 to Thr924, Gly936 to Lys965, Lys999 to Val1016, and Phe1157 to Ser1170. Ser940 carries the phosphoserine modification. Residue Ser1161 is modified to Phosphoserine. 2 stretches are compositionally biased toward polar residues: residues Lys1171–Lys1181 and Gly1269–Ala1281. Residue Lys1343 is modified to N6-acetyllysine. Positions Tyr1683–Thr1687 match the SUMO interaction motif 1 (SIM); mediates the binding to polysumoylated substrates motif. The segment at Asp1709–Arg1982 is NCOA2-binding. The short motif at Phe1737 to Thr1741 is the SUMO interaction motif 2 (SIM); mediates the binding to polysumoylated substrates element. Residues Tyr1794 to Thr1798 carry the SUMO interaction motif 3 (SIM); mediates the binding to polysumoylated substrates motif. Residues Ser1803–Thr1909 are disordered. A compositionally biased stretch (basic and acidic residues) spans Lys1851–Thr1865.

Self-associates. Component of the death-inducing signaling complex (DISC) with CASP8, FADD and FAS. Interacts with NCOA2 and NCOA3. Interacts with SRRT. Interacts with TRAF2. Interacts with NPAT. Interacts (via SIM domains) with SUMO1 and SUMO2. Interacts with SP100; may negatively regulate CASP8AP2 export from the nucleus to the cytoplasm.

It localises to the cytoplasm. Its subcellular location is the nucleus. The protein resides in the PML body. The protein localises to the mitochondrion. Participates in TNF-alpha-induced blockade of glucocorticoid receptor (GR) transactivation at the nuclear receptor coactivator level, upstream and independently of NF-kappa-B. Suppresses both NCOA2- and NCOA3-induced enhancement of GR transactivation. Involved in TNF-alpha-induced activation of NF-kappa-B via a TRAF2-dependent pathway. Acts as a downstream mediator for CASP8-induced activation of NF-kappa-B. Required for the activation of CASP8 in FAS-mediated apoptosis. Required for histone gene transcription and progression through S phase. The protein is CASP8-associated protein 2 of Homo sapiens (Human).